The chain runs to 274 residues: Thiamine kinase (274 aa).

Belongs to the thiamine kinase family.

It catalyses the reaction thiamine + ATP = thiamine phosphate + ADP + H(+). It participates in cofactor biosynthesis; thiamine diphosphate biosynthesis; thiamine phosphate from thiamine: step 1/1. In terms of biological role, catalyzes the ATP-dependent phosphorylation of thiamine to thiamine phosphate. Is involved in thiamine salvage. The protein is Thiamine kinase of Salmonella typhi.